The chain runs to 745 residues: Cytoskeleton-associated protein 2-like (745 aa).

A disordered region spans residues Ala-25 to Ser-141. The segment covering Lys-30–Thr-61 has biased composition (polar residues). Over residues Ser-109–Ser-120 the composition is skewed to low complexity. Polar residues predominate over residues Phe-121 to Glu-133. Positions Lys-185 to Asn-187 match the KEN box motif. Residues Leu-192 to Leu-203 show a composition bias toward basic and acidic residues. Disordered stretches follow at residues Leu-192 to Thr-217, Val-256 to Arg-276, and Arg-385 to Phe-411. Lys-198 participates in a covalent cross-link: Glycyl lysine isopeptide (Lys-Gly) (interchain with G-Cter in SUMO1); alternate. A Glycyl lysine isopeptide (Lys-Gly) (interchain with G-Cter in SUMO2); alternate cross-link involves residue Lys-198. Tyr-204 is modified (phosphotyrosine). The span at Ala-389 to Phe-411 shows a compositional bias: polar residues. At Thr-742 the chain carries Phosphothreonine. The residue at position 745 (Ser-745) is a Phosphoserine.

This sequence belongs to the CKAP2 family. Ubiquitinated by the anaphase promoting complex/cyclosome (APC/C).

It localises to the cytoplasm. The protein resides in the cytoskeleton. It is found in the spindle pole. Functionally, microtubule-associated protein required for mitotic spindle formation and cell-cycle progression in neural progenitor cells. This Homo sapiens (Human) protein is Cytoskeleton-associated protein 2-like (CKAP2L).